Here is a 524-residue protein sequence, read N- to C-terminus: D-3-phosphoglycerate dehydrogenase (524 aa).

NAD(+) is bound by residues 149–150 (RI), Asp-169, 229–231 (CAR), and Asp-255. Residue Arg-231 is part of the active site. Glu-260 is a catalytic residue. The active-site Proton donor is His-278. 278–281 (HQGA) contributes to the NAD(+) binding site. In terms of domain architecture, ACT spans 452–524 (LAIIKHIDRP…NIKDVAVINL (73 aa)).

The protein belongs to the D-isomer specific 2-hydroxyacid dehydrogenase family.

The catalysed reaction is (2R)-3-phosphoglycerate + NAD(+) = 3-phosphooxypyruvate + NADH + H(+). Its pathway is amino-acid biosynthesis; L-serine biosynthesis; L-serine from 3-phospho-D-glycerate: step 1/3. This chain is D-3-phosphoglycerate dehydrogenase (serA), found in Methanocaldococcus jannaschii (strain ATCC 43067 / DSM 2661 / JAL-1 / JCM 10045 / NBRC 100440) (Methanococcus jannaschii).